The primary structure comprises 711 residues: Amyloid beta precursor protein binding family B member 1 (711 aa).

Ser135 carries the phosphoserine modification. Disordered stretches follow at residues 140–257 (NTQG…SDLP), 277–300 (GTTQ…EESQ), and 321–364 (EPSE…QRNA). Acidic residues predominate over residues 156-174 (EVEEEDEDEEEEDEEEEDL). Residue Lys205 is modified to N6-acetyllysine. The span at 224–235 (SWATLSQGSPSY) shows a compositional bias: polar residues. Residues 254-286 (SDLPAGWMRVQDTSGTYYWHIPTGTTQWEPPGR) enclose the WW domain. Residues 288–300 (SPSQGNSPQEESQ) show a composition bias toward polar residues. 2 PID domains span residues 365–533 (NPGI…QVEF) and 538–700 (NELV…LWGS). Ser460 carries the post-translational modification Phosphoserine; by PKC. A Phosphoserine modification is found at Ser518. Tyr548 carries the post-translational modification Phosphotyrosine; by ABL1. A Phosphoserine; by SGK1 modification is found at Ser611. N6-acetyllysine is present on Lys702.

In terms of assembly, component of a complex, at least composed of APBB1, RASD1/DEXRAS1 and APP. Interacts (via PID domain 2) with APP (with the intracellular domain of the amyloid-beta precursor protein). Interacts (via PID domain 2) with RASD1/DEXRAS1; impairs the transcription activation activity. Interacts (via PID domain 1) with KAT5/TIP60. Interacts (via the WW domain) with the proline-rich region of APBB1IP. Interacts with TSHZ1 and TSHZ2. Interacts (via the WW domain) with histone H2AX (when phosphorylated on 'Tyr-142') and the proline-rich region of ENAH. Interacts with MAPK8. Interacts (via PID domain 1) with TSHZ3 (via homeobox domain). Interacts with SET. Found in a trimeric complex with HDAC1 and TSHZ3; the interaction between HDAC1 and APBB1 is mediated by TSHZ3. Interacts (via WWW domain) with NEK6. Interacts (via WWW domain) with ABL1. Interacts with RNF157. Interacts with ARF6. In terms of processing, polyubiquitination by RNF157 leads to degradation by the proteasome. Phosphorylation at Ser-611 by SGK1 promotes its localization to the nucleus. Phosphorylated following nuclear translocation. Phosphorylation at Tyr-547 by ABL1 enhances transcriptional activation activity and reduces the affinity for RASD1/DEXRAS1. Phosphorylated at Ser-460 by PKC upon insulin activation. Post-translationally, acetylation at Lys-205 and Lys-702 by KAT5 promotes its transcription activator activity. Brain, not in liver, very low in other tissues. The long (neuron-specific) form is expressed only in brain.

The protein resides in the cell membrane. Its subcellular location is the cytoplasm. It is found in the nucleus. It localises to the cell projection. The protein localises to the growth cone. The protein resides in the nucleus speckle. Transcription coregulator that can have both coactivator and corepressor functions. Adapter protein that forms a transcriptionally active complex with the gamma-secretase-derived amyloid precursor protein (APP) intracellular domain. Plays a central role in the response to DNA damage by translocating to the nucleus and inducing apoptosis. May act by specifically recognizing and binding histone H2AX phosphorylated on 'Tyr-142' (H2AXY142ph) at double-strand breaks (DSBs), recruiting other pro-apoptosis factors such as MAPK8/JNK1. Required for histone H4 acetylation at double-strand breaks (DSBs). Its ability to specifically bind modified histones and chromatin modifying enzymes such as KAT5/TIP60, probably explains its transcription activation activity. Functions in association with TSHZ3, SET and HDAC factors as a transcriptional repressor, that inhibits the expression of CASP4. Associates with chromatin in a region surrounding the CASP4 transcriptional start site(s). Involved in hippocampal neurite branching and neuromuscular junction formation, as a result plays a role in spatial memory functioning. Plays a role in the maintenance of lens transparency. May play a role in muscle cell strength. Acts as a molecular adapter that functions in neurite outgrowth by activating the RAC1-ARF6 axis upon insulin treatment. The sequence is that of Amyloid beta precursor protein binding family B member 1 from Rattus norvegicus (Rat).